Here is a 157-residue protein sequence, read N- to C-terminus: Catabolic 3-dehydroquinase (157 aa).

Y27 acts as the Proton acceptor in catalysis. The substrate site is built by N80, H86, and D93. H106 (proton donor) is an active-site residue. Residues 107 to 108 (VS) and R117 each bind substrate.

It belongs to the type-II 3-dehydroquinase family. In terms of assembly, homododecamer. Adopts a ring-like structure, composed of an arrangement of two hexameric rings stacked on top of one another.

The catalysed reaction is 3-dehydroquinate = 3-dehydroshikimate + H2O. It functions in the pathway aromatic compound metabolism; 3,4-dihydroxybenzoate biosynthesis; 3,4-dihydroxybenzoate from 3-dehydroquinate: step 1/2. Its function is as follows. Is involved in the catabolism of quinate. Allows the utilization of quinate as carbon source via the beta-ketoadipate pathway. This is Catabolic 3-dehydroquinase from Pyricularia oryzae (strain 70-15 / ATCC MYA-4617 / FGSC 8958) (Rice blast fungus).